We begin with the raw amino-acid sequence, 90 residues long: UPF0367 protein PMT9312_0127 (90 aa).

This sequence belongs to the UPF0367 family.

This chain is UPF0367 protein PMT9312_0127, found in Prochlorococcus marinus (strain MIT 9312).